We begin with the raw amino-acid sequence, 194 residues long: Probable nicotinate-nucleotide adenylyltransferase (194 aa).

This sequence belongs to the NadD family.

It catalyses the reaction nicotinate beta-D-ribonucleotide + ATP + H(+) = deamido-NAD(+) + diphosphate. It functions in the pathway cofactor biosynthesis; NAD(+) biosynthesis; deamido-NAD(+) from nicotinate D-ribonucleotide: step 1/1. Functionally, catalyzes the reversible adenylation of nicotinate mononucleotide (NaMN) to nicotinic acid adenine dinucleotide (NaAD). The sequence is that of Probable nicotinate-nucleotide adenylyltransferase from Christiangramia forsetii (strain DSM 17595 / CGMCC 1.15422 / KT0803) (Gramella forsetii).